A 403-amino-acid chain; its full sequence is Leu/Ile/Val-binding protein homolog 8 (403 aa).

The signal sequence occupies residues 1 to 26; the sequence is MRLSRLLIGASLGVALSSTVFTAALA.

It belongs to the leucine-binding protein family.

In terms of biological role, component of an amino-acid transport system. In Brucella melitensis biotype 1 (strain ATCC 23456 / CCUG 17765 / NCTC 10094 / 16M), this protein is Leu/Ile/Val-binding protein homolog 8.